Consider the following 96-residue polypeptide: uncharacterized protein (96 aa).

Asn-4 carries an N-linked (GlcNAc...) asparagine glycan. The helical transmembrane segment at 59 to 81 (VFFTIFDTIITIIVRSGIPFPLL) threads the bilayer.

It localises to the membrane. This is an uncharacterized protein from Saccharomyces cerevisiae (strain ATCC 204508 / S288c) (Baker's yeast).